Reading from the N-terminus, the 174-residue chain is Shikimate kinase (174 aa).

15 to 20 (GTGKST) provides a ligand contact to ATP. A Mg(2+)-binding site is contributed by Ser-19. Substrate is bound by residues Asp-37, Arg-61, and Gly-82. Arg-120 lines the ATP pocket. Substrate is bound at residue Arg-138.

This sequence belongs to the shikimate kinase family. In terms of assembly, monomer. Mg(2+) serves as cofactor.

It is found in the cytoplasm. The enzyme catalyses shikimate + ATP = 3-phosphoshikimate + ADP + H(+). It functions in the pathway metabolic intermediate biosynthesis; chorismate biosynthesis; chorismate from D-erythrose 4-phosphate and phosphoenolpyruvate: step 5/7. Catalyzes the specific phosphorylation of the 3-hydroxyl group of shikimic acid using ATP as a cosubstrate. In Staphylococcus aureus (strain MRSA252), this protein is Shikimate kinase.